The chain runs to 243 residues: Ubiquinone/menaquinone biosynthesis C-methyltransferase UbiE (243 aa).

Residues threonine 69, aspartate 90, and aspartate 116–alanine 117 each bind S-adenosyl-L-methionine.

This sequence belongs to the class I-like SAM-binding methyltransferase superfamily. MenG/UbiE family.

It carries out the reaction a 2-demethylmenaquinol + S-adenosyl-L-methionine = a menaquinol + S-adenosyl-L-homocysteine + H(+). The enzyme catalyses a 2-methoxy-6-(all-trans-polyprenyl)benzene-1,4-diol + S-adenosyl-L-methionine = a 5-methoxy-2-methyl-3-(all-trans-polyprenyl)benzene-1,4-diol + S-adenosyl-L-homocysteine + H(+). It functions in the pathway quinol/quinone metabolism; menaquinone biosynthesis; menaquinol from 1,4-dihydroxy-2-naphthoate: step 2/2. The protein operates within cofactor biosynthesis; ubiquinone biosynthesis. Functionally, methyltransferase required for the conversion of demethylmenaquinol (DMKH2) to menaquinol (MKH2) and the conversion of 2-polyprenyl-6-methoxy-1,4-benzoquinol (DDMQH2) to 2-polyprenyl-3-methyl-6-methoxy-1,4-benzoquinol (DMQH2). The sequence is that of Ubiquinone/menaquinone biosynthesis C-methyltransferase UbiE from Cupriavidus taiwanensis (strain DSM 17343 / BCRC 17206 / CCUG 44338 / CIP 107171 / LMG 19424 / R1) (Ralstonia taiwanensis (strain LMG 19424)).